The following is a 524-amino-acid chain: Lysine--tRNA ligase (524 aa).

The 'HIGH' region signature appears at Ala-39 to Ser-47. A 'KMSKS' region motif is present at residues Lys-294–Ser-298. Lys-297 provides a ligand contact to ATP.

It belongs to the class-I aminoacyl-tRNA synthetase family.

Its subcellular location is the cytoplasm. It carries out the reaction tRNA(Lys) + L-lysine + ATP = L-lysyl-tRNA(Lys) + AMP + diphosphate. This is Lysine--tRNA ligase (lysS) from Cenarchaeum symbiosum.